The primary structure comprises 120 residues: Non-specific lipid-transfer protein 2 (120 aa).

The first 25 residues, methionine 1–alanine 25, serve as a signal peptide directing secretion. Cystine bridges form between cysteine 29–cysteine 78, cysteine 39–cysteine 55, cysteine 56–cysteine 101, and cysteine 76–cysteine 115.

It belongs to the plant LTP family. Expressed in roots, stem, leaves and tendrils of the mature plant.

Functionally, plant non-specific lipid-transfer proteins transfer phospholipids as well as galactolipids across membranes. May play a role in wax or cutin deposition in the cell walls of expanding epidermal cells and certain secretory tissues. In Pisum sativum (Garden pea), this protein is Non-specific lipid-transfer protein 2.